Consider the following 77-residue polypeptide: Acyl carrier protein (77 aa).

Positions 1-76 (MENFDKVKDI…DAVKFINSLE (76 aa)) constitute a Carrier domain. Ser36 carries the post-translational modification O-(pantetheine 4'-phosphoryl)serine.

The protein belongs to the acyl carrier protein (ACP) family. In terms of processing, 4'-phosphopantetheine is transferred from CoA to a specific serine of apo-ACP by AcpS. This modification is essential for activity because fatty acids are bound in thioester linkage to the sulfhydryl of the prosthetic group.

It is found in the cytoplasm. It functions in the pathway lipid metabolism; fatty acid biosynthesis. In terms of biological role, carrier of the growing fatty acid chain in fatty acid biosynthesis. This Staphylococcus aureus (strain Mu3 / ATCC 700698) protein is Acyl carrier protein.